Here is a 320-residue protein sequence, read N- to C-terminus: Cytochrome f (320 aa).

Residues Met1–Ala35 form the signal peptide. Residues Tyr36, Cys56, Cys59, and His60 each contribute to the heme site. Residues Val286–Lys306 traverse the membrane as a helical segment.

The protein belongs to the cytochrome f family. The 4 large subunits of the cytochrome b6-f complex are cytochrome b6, subunit IV (17 kDa polypeptide, petD), cytochrome f and the Rieske protein, while the 4 small subunits are PetG, PetL, PetM and PetN. The complex functions as a dimer. The cofactor is heme.

The protein localises to the plastid. Its subcellular location is the chloroplast thylakoid membrane. Its function is as follows. Component of the cytochrome b6-f complex, which mediates electron transfer between photosystem II (PSII) and photosystem I (PSI), cyclic electron flow around PSI, and state transitions. The sequence is that of Cytochrome f from Phalaenopsis aphrodite subsp. formosana (Moth orchid).